The following is a 96-amino-acid chain: Protein YddL (96 aa).

The signal sequence occupies residues 1–21 (MKLKIVAVVVTGLLAANVAHA).

The sequence is that of Protein YddL (yddL) from Escherichia coli (strain K12).